A 120-amino-acid chain; its full sequence is Flagellar protein FliT (120 aa).

The required for homodimerization stretch occupies residues 1-50 (MERHQHLLSEYQQILTLSEQMLMLATVENWNALVDLEMTYLKAVENTANI). The fliD binding stretch occupies residues 60 to 98 (LQELLRQKLRSILENEIEIKRLLQRRLDKLSELVGQSTR).

Belongs to the FliT family. As to quaternary structure, homodimer. Interacts with FliD and FlhC.

The protein resides in the cytoplasm. Its subcellular location is the cytosol. Its function is as follows. Dual-function protein that regulates the transcription of class 2 flagellar operons and that also acts as an export chaperone for the filament-capping protein FliD. As a transcriptional regulator, acts as an anti-FlhDC factor; it directly binds FlhC, thus inhibiting the binding of the FlhC/FlhD complex to class 2 promoters, resulting in decreased expression of class 2 flagellar operons. As a chaperone, effects FliD transition to the membrane by preventing its premature polymerization, and by directing it to the export apparatus. This is Flagellar protein FliT from Yersinia pestis bv. Antiqua (strain Antiqua).